The chain runs to 228 residues: Isonitrile hydratase (228 aa).

Residue Cys-101 is part of the active site.

In terms of assembly, homodimer.

It carries out the reaction N-cyclohexylformamide = cyclohexyl isocyanide + H2O. With respect to regulation, sensitive to thiol reagents and oxidizing reagents, but is not influenced by chelators or reducing reagents. Functionally, catalyzes the hydration of cyclohexyl isocyanide to N-cyclohexylformamide. Acts on various isonitriles, but not on nitriles or amides. Probably involved in detoxification. The sequence is that of Isonitrile hydratase (inhA) from Pseudomonas putida (Arthrobacter siderocapsulatus).